Here is a 555-residue protein sequence, read N- to C-terminus: Glutamine--tRNA ligase (555 aa).

The short motif at 34 to 44 is the 'HIGH' region element; the sequence is PEPNGYLHIGH. ATP contacts are provided by residues 35 to 37 and 41 to 47; these read EPN and HIGHAKS. Residues Asp67 and Tyr212 each contribute to the L-glutamine site. Residues Thr231, 261–262, and 269–271 each bind ATP; these read RL and MSK. The short motif at 268 to 272 is the 'KMSKS' region element; sequence IMSKR.

It belongs to the class-I aminoacyl-tRNA synthetase family. Monomer.

The protein localises to the cytoplasm. It carries out the reaction tRNA(Gln) + L-glutamine + ATP = L-glutaminyl-tRNA(Gln) + AMP + diphosphate. This is Glutamine--tRNA ligase from Erwinia tasmaniensis (strain DSM 17950 / CFBP 7177 / CIP 109463 / NCPPB 4357 / Et1/99).